A 663-amino-acid polypeptide reads, in one-letter code: Protein KINESIN LIGHT CHAIN-RELATED 2 (663 aa).

Residues 1–14 (MDVGESNERVKDDS) show a composition bias toward basic and acidic residues. Disordered stretches follow at residues 1-24 (MDVG…RSPL) and 86-146 (GESK…KVSV). Residue S19 is modified to Phosphoserine. Positions 86-100 (GESKKEIILEKKEES) are enriched in basic and acidic residues. A compositionally biased stretch (polar residues) spans 102–111 (GEGSLSQKKP). TPR repeat units lie at residues 147–181 (DEES…ALRA), 200–233 (VMSL…PMIE), 243–276 (FAGC…QRQV), 285–318 (GETC…HKEN), 329–363 (AADR…SSQN), 369–402 (AAVD…FKQG), 411–444 (ALVY…YLKP), 454–487 (ATGF…YANA), 495–528 (AGIE…FRNS), 537–570 (GIAL…LEKE), and 579–612 (LAVY…REEK).

The protein belongs to the kinesin light chain family.

The chain is Protein KINESIN LIGHT CHAIN-RELATED 2 from Arabidopsis thaliana (Mouse-ear cress).